Consider the following 81-residue polypeptide: ATP synthase subunit c (81 aa).

The next 2 helical transmembrane spans lie at 5 to 25 (IAAG…IGAG) and 57 to 77 (VGLV…FVFA).

Belongs to the ATPase C chain family. As to quaternary structure, F-type ATPases have 2 components, F(1) - the catalytic core - and F(0) - the membrane proton channel. F(1) has five subunits: alpha(3), beta(3), gamma(1), delta(1), epsilon(1). F(0) has three main subunits: a(1), b(2) and c(10-14). The alpha and beta chains form an alternating ring which encloses part of the gamma chain. F(1) is attached to F(0) by a central stalk formed by the gamma and epsilon chains, while a peripheral stalk is formed by the delta and b chains.

It is found in the cell membrane. Its function is as follows. F(1)F(0) ATP synthase produces ATP from ADP in the presence of a proton or sodium gradient. F-type ATPases consist of two structural domains, F(1) containing the extramembraneous catalytic core and F(0) containing the membrane proton channel, linked together by a central stalk and a peripheral stalk. During catalysis, ATP synthesis in the catalytic domain of F(1) is coupled via a rotary mechanism of the central stalk subunits to proton translocation. Key component of the F(0) channel; it plays a direct role in translocation across the membrane. A homomeric c-ring of between 10-14 subunits forms the central stalk rotor element with the F(1) delta and epsilon subunits. This Mycobacterium marinum (strain ATCC BAA-535 / M) protein is ATP synthase subunit c.